Reading from the N-terminus, the 357-residue chain is MADLKEIYNEELISQLIHHVRSSYPDFNKNRFLDTLRLEDWPELTLKERMRRVTVSLYETLPKQYVEALTILRDTAPHFKGLSGILFPDYVEQYGLAHWEESIKALESFTQYSTSEFAVRPFLLLDQEKMIAQLLAWSEHKNEHVRRLASEGSRPRLPWGKSIPALKSDPSPVLPILEKLMQDESLYVRKSVANNLNDISKTHPHLLRKVADQWYGTHPHTDWIIKHAYRTLLKKGDKQALALFGYENADSIQLHDLTCQPKRIVIGESLEFSFYIHSDRDQKVRIEYAIDFVKARGQRHQKVFKITETNIRKNETKSYTRIQSFKDLTTRKHYKGIHTLSVIINGEVKDSLDFQVC.

An HEAT repeat occupies 173–211 (VLPILEKLMQDESLYVRKSVANNLNDISKTHPHLLRKVA).

This is an uncharacterized protein from Bacillus subtilis (strain 168).